The sequence spans 323 residues: ATP synthase gamma chain (323 aa).

The segment at 215-237 is disordered; it reads PAGGPAKEQEQGDEGGHGAPSAA. Basic and acidic residues predominate over residues 221–230; sequence KEQEQGDEGG.

This sequence belongs to the ATPase gamma chain family. F-type ATPases have 2 components, CF(1) - the catalytic core - and CF(0) - the membrane proton channel. CF(1) has five subunits: alpha(3), beta(3), gamma(1), delta(1), epsilon(1). CF(0) has three main subunits: a, b and c.

The protein resides in the cell inner membrane. Functionally, produces ATP from ADP in the presence of a proton gradient across the membrane. The gamma chain is believed to be important in regulating ATPase activity and the flow of protons through the CF(0) complex. This is ATP synthase gamma chain from Sorangium cellulosum (strain So ce56) (Polyangium cellulosum (strain So ce56)).